Reading from the N-terminus, the 447-residue chain is Multicopper oxidase mco (447 aa).

The segment covering 1–25 (MMNMKEDKKNTMDMKNMKHHDERKK) has biased composition (basic and acidic residues). Positions 1-28 (MMNMKEDKKNTMDMKNMKHHDERKKLNS) are disordered. Cu cation is bound by residues histidine 107, histidine 109, histidine 147, histidine 149, histidine 375, histidine 378, histidine 380, histidine 428, cysteine 429, histidine 430, histidine 434, and methionine 439.

The protein belongs to the multicopper oxidase family. Cu cation serves as cofactor.

It is found in the cytoplasm. May be involved in copper homeostasis and oxidative stress response. In Staphylococcus epidermidis (strain ATCC 12228 / FDA PCI 1200), this protein is Multicopper oxidase mco (mco).